Reading from the N-terminus, the 662-residue chain is Probable quinol oxidase subunit 1 (662 aa).

Transmembrane regions (helical) follow at residues Trp14–Ile34 and Ile58–Ile78. Position 102 (His102) interacts with Fe(II)-heme a. The next 8 membrane-spanning stretches (helical) occupy residues Gly103–Val123, Val140–Gly160, Ile187–Ile207, Phe228–Met248, Phe273–Tyr293, Met311–Phe331, Gly336–Val356, and Met376–Leu396. Residues His279, Tyr283, His328, and His329 each coordinate Cu cation. The segment at residues His279–Tyr283 is a cross-link (1'-histidyl-3'-tyrosine (His-Tyr)). A heme a3-binding site is contributed by His414. 5 consecutive transmembrane segments (helical) span residues Phe415–Tyr435, Cys451–Leu471, Ile493–Val513, Pro587–Ile604, and Val608–Phe627. His416 is a binding site for Fe(II)-heme a.

Belongs to the heme-copper respiratory oxidase family. Requires Cu cation as cofactor. The cofactor is ferriheme a. Heme A3. is required as a cofactor.

It localises to the cell membrane. It carries out the reaction 2 a quinol + O2 = 2 a quinone + 2 H2O. It functions in the pathway energy metabolism; oxidative phosphorylation. In terms of biological role, catalyzes quinol oxidation with the concomitant reduction of oxygen to water. This Staphylococcus aureus (strain MRSA252) protein is Probable quinol oxidase subunit 1 (qoxB).